We begin with the raw amino-acid sequence, 264 residues long: Probable amino-acid-binding protein YxeM (264 aa).

Positions 1-20 (MKMKKWTVLVVAALLAVLSA) are cleaved as a signal peptide. Cysteine 21 is lipidated: N-palmitoyl cysteine. The S-diacylglycerol cysteine moiety is linked to residue cysteine 21.

This sequence belongs to the bacterial solute-binding protein 3 family. The complex is composed of two ATP-binding proteins (YxeO), two transmembrane proteins (YxeN) and a solute-binding protein (YxeM).

The protein resides in the cell membrane. The protein localises to the membrane raft. Its function is as follows. Probably part of the ABC transporter complex YxeMNO that could be involved in amino-acid import. May transport S-methylcysteine. The protein is Probable amino-acid-binding protein YxeM (yxeM) of Bacillus subtilis (strain 168).